Consider the following 596-residue polypeptide: Proline--tRNA ligase (596 aa).

This sequence belongs to the class-II aminoacyl-tRNA synthetase family. ProS type 1 subfamily. In terms of assembly, homodimer.

The protein resides in the cytoplasm. It catalyses the reaction tRNA(Pro) + L-proline + ATP = L-prolyl-tRNA(Pro) + AMP + diphosphate. Its function is as follows. Catalyzes the attachment of proline to tRNA(Pro) in a two-step reaction: proline is first activated by ATP to form Pro-AMP and then transferred to the acceptor end of tRNA(Pro). As ProRS can inadvertently accommodate and process non-cognate amino acids such as alanine and cysteine, to avoid such errors it has two additional distinct editing activities against alanine. One activity is designated as 'pretransfer' editing and involves the tRNA(Pro)-independent hydrolysis of activated Ala-AMP. The other activity is designated 'posttransfer' editing and involves deacylation of mischarged Ala-tRNA(Pro). The misacylated Cys-tRNA(Pro) is not edited by ProRS. In Prochlorococcus marinus (strain NATL1A), this protein is Proline--tRNA ligase.